A 331-amino-acid polypeptide reads, in one-letter code: Lipoyl synthase (331 aa).

The interval 1 to 33 (MSDALIASSSEAPQSPAEQYDPTRKQKSADKTA) is disordered. Over residues 7–19 (ASSSEAPQSPAEQ) the composition is skewed to low complexity. Positions 21 to 33 (DPTRKQKSADKTA) are enriched in basic and acidic residues. [4Fe-4S] cluster contacts are provided by cysteine 78, cysteine 83, cysteine 89, cysteine 104, cysteine 108, cysteine 111, and serine 318. The 219-residue stretch at 89–307 (CFGKGTATFM…EEEAYKMGFT (219 aa)) folds into the Radical SAM core domain.

Belongs to the radical SAM superfamily. Lipoyl synthase family. Requires [4Fe-4S] cluster as cofactor.

It localises to the cytoplasm. The enzyme catalyses [[Fe-S] cluster scaffold protein carrying a second [4Fe-4S](2+) cluster] + N(6)-octanoyl-L-lysyl-[protein] + 2 oxidized [2Fe-2S]-[ferredoxin] + 2 S-adenosyl-L-methionine + 4 H(+) = [[Fe-S] cluster scaffold protein] + N(6)-[(R)-dihydrolipoyl]-L-lysyl-[protein] + 4 Fe(3+) + 2 hydrogen sulfide + 2 5'-deoxyadenosine + 2 L-methionine + 2 reduced [2Fe-2S]-[ferredoxin]. It participates in protein modification; protein lipoylation via endogenous pathway; protein N(6)-(lipoyl)lysine from octanoyl-[acyl-carrier-protein]: step 2/2. In terms of biological role, catalyzes the radical-mediated insertion of two sulfur atoms into the C-6 and C-8 positions of the octanoyl moiety bound to the lipoyl domains of lipoate-dependent enzymes, thereby converting the octanoylated domains into lipoylated derivatives. The polypeptide is Lipoyl synthase (Cupriavidus pinatubonensis (strain JMP 134 / LMG 1197) (Cupriavidus necator (strain JMP 134))).